Reading from the N-terminus, the 320-residue chain is MIGKLVRDLKIPDQRHPEKAHRPDNVQPKKPSWIRVKAPTSEGYKETRDIIRGQKLATVCEEAGCPNVGECWSQGHATMMIMGEICTRGCSFCNVATGRPQALDAFEPGRVAHAVSQLGLKHVVVTSVDRDDLEDGGAEHFAQTIRAIRHRAPATTIEVLVPDFLKCGPSALETVVAARPDVFNHNLETVPGLYPEVRPGARYFHSLRLLQRAKELDPSIFTKSGIMVGLGEDRQGVLQVMDDMRSAEVDFLTIGQYLQPTPKHHRVDRFVTPEEFAGYEKAAYGKGFLMVSATPLTRSSYHAGDDFARLRDARQKRLGA.

Basic and acidic residues predominate over residues 1–24; it reads MIGKLVRDLKIPDQRHPEKAHRPD. The disordered stretch occupies residues 1–30; the sequence is MIGKLVRDLKIPDQRHPEKAHRPDNVQPKK. Cys-60, Cys-65, Cys-71, Cys-86, Cys-90, Cys-93, and Ser-300 together coordinate [4Fe-4S] cluster. The Radical SAM core domain occupies 72-289; it reads WSQGHATMMI…EKAAYGKGFL (218 aa).

Belongs to the radical SAM superfamily. Lipoyl synthase family. Requires [4Fe-4S] cluster as cofactor.

Its subcellular location is the cytoplasm. It catalyses the reaction [[Fe-S] cluster scaffold protein carrying a second [4Fe-4S](2+) cluster] + N(6)-octanoyl-L-lysyl-[protein] + 2 oxidized [2Fe-2S]-[ferredoxin] + 2 S-adenosyl-L-methionine + 4 H(+) = [[Fe-S] cluster scaffold protein] + N(6)-[(R)-dihydrolipoyl]-L-lysyl-[protein] + 4 Fe(3+) + 2 hydrogen sulfide + 2 5'-deoxyadenosine + 2 L-methionine + 2 reduced [2Fe-2S]-[ferredoxin]. Its pathway is protein modification; protein lipoylation via endogenous pathway; protein N(6)-(lipoyl)lysine from octanoyl-[acyl-carrier-protein]: step 2/2. In terms of biological role, catalyzes the radical-mediated insertion of two sulfur atoms into the C-6 and C-8 positions of the octanoyl moiety bound to the lipoyl domains of lipoate-dependent enzymes, thereby converting the octanoylated domains into lipoylated derivatives. This is Lipoyl synthase from Cereibacter sphaeroides (strain ATCC 17029 / ATH 2.4.9) (Rhodobacter sphaeroides).